The sequence spans 345 residues: Fructose-1,6-bisphosphatase class 1 (345 aa).

Mg(2+) contacts are provided by Glu-90, Asp-109, Leu-111, and Asp-112. Substrate is bound by residues 112–115 (DGSS) and Asn-199. Glu-271 provides a ligand contact to Mg(2+).

It belongs to the FBPase class 1 family. In terms of assembly, homotetramer. Mg(2+) serves as cofactor.

Its subcellular location is the cytoplasm. The enzyme catalyses beta-D-fructose 1,6-bisphosphate + H2O = beta-D-fructose 6-phosphate + phosphate. The protein operates within carbohydrate biosynthesis; Calvin cycle. The polypeptide is Fructose-1,6-bisphosphatase class 1 (Rhodopseudomonas palustris (strain BisB5)).